A 385-amino-acid polypeptide reads, in one-letter code: MVPVRGQITAFRCSQNPTKTIWRTLATAEPPKPKRKRTMFTDKLNQGPSFADFVSGKASNMTIDPLEAARQDPDQRLPSWLKVPIPKGKSFHTLKKDVRELKLATVCEEAKCPNIGECWGGKKSEATATIMLMGDTCTRGCRFCSVKTSRKPAPPDPMEPENTAEAISRWGLGYVVLTTVDRDDLVDGGAHHLAETVRKIKEKAPQILVEVLGGDFRGDLDMASVLARSGLDVYAHNIETVEDLTPHVRDRRATYRQSLSILQRAKETKPSLVTKTSMMLGFGETDEQIMQTLRDLREIKCDVVTFGQYMRPTKRHMKVVEYVTPEKFDYWRDTALKMGFLYVASGPLVRSSYKAGEAFIENVIRKRNHNVGETPRLESASAAQL.

[4Fe-4S] cluster-binding residues include cysteine 107, cysteine 112, cysteine 118, cysteine 137, cysteine 141, cysteine 144, and serine 352. One can recognise a Radical SAM core domain in the interval 122-341; that stretch reads KKSEATATIM…RDTALKMGFL (220 aa).

Belongs to the radical SAM superfamily. Lipoyl synthase family. [4Fe-4S] cluster is required as a cofactor.

Its subcellular location is the mitochondrion. The catalysed reaction is [[Fe-S] cluster scaffold protein carrying a second [4Fe-4S](2+) cluster] + N(6)-octanoyl-L-lysyl-[protein] + 2 oxidized [2Fe-2S]-[ferredoxin] + 2 S-adenosyl-L-methionine + 4 H(+) = [[Fe-S] cluster scaffold protein] + N(6)-[(R)-dihydrolipoyl]-L-lysyl-[protein] + 4 Fe(3+) + 2 hydrogen sulfide + 2 5'-deoxyadenosine + 2 L-methionine + 2 reduced [2Fe-2S]-[ferredoxin]. Its pathway is protein modification; protein lipoylation via endogenous pathway; protein N(6)-(lipoyl)lysine from octanoyl-[acyl-carrier-protein]: step 2/2. Catalyzes the radical-mediated insertion of two sulfur atoms into the C-6 and C-8 positions of the octanoyl moiety bound to the lipoyl domains of lipoate-dependent enzymes, thereby converting the octanoylated domains into lipoylated derivatives. This Meyerozyma guilliermondii (strain ATCC 6260 / CBS 566 / DSM 6381 / JCM 1539 / NBRC 10279 / NRRL Y-324) (Yeast) protein is Lipoyl synthase, mitochondrial.